We begin with the raw amino-acid sequence, 169 residues long: MDLSRIPAQPKPGVINILIEIAGGSQNKYEFDKDLEAFALDRVLYSSVKYPYDYGFVPNTLADDGDPLDGMVIIDEPTFPGCVIAARPIGFLEMIDGGDRDEKILAVPDKDPRYAHVKSLNDVAPHRLDEIAEFFRSYKNLEKKVTQILGWQDVDQVKALVDQSIKAYK.

Residue methionine 1 is modified to N-formylmethionine. Substrate is bound by residues lysine 28, arginine 42, and tyrosine 54. Mg(2+) contacts are provided by aspartate 64, aspartate 69, and aspartate 101. Substrate is bound at residue tyrosine 138.

It belongs to the PPase family. Homohexamer. It depends on Mg(2+) as a cofactor.

It localises to the cytoplasm. It carries out the reaction diphosphate + H2O = 2 phosphate + H(+). Its function is as follows. Catalyzes the hydrolysis of inorganic pyrophosphate (PPi) forming two phosphate ions. The sequence is that of Inorganic pyrophosphatase from Nostoc sp. (strain PCC 7120 / SAG 25.82 / UTEX 2576).